The chain runs to 413 residues: Phosphoglycerate kinase (413 aa).

Residues 19-21 (DLN), R34, 57-60 (HQSK), R114, and R154 contribute to the substrate site. ATP-binding positions include E332 and 358–361 (GGHS).

This sequence belongs to the phosphoglycerate kinase family. In terms of assembly, monomer.

Its subcellular location is the cytoplasm. It carries out the reaction (2R)-3-phosphoglycerate + ATP = (2R)-3-phospho-glyceroyl phosphate + ADP. Its pathway is carbohydrate degradation; glycolysis; pyruvate from D-glyceraldehyde 3-phosphate: step 2/5. The sequence is that of Phosphoglycerate kinase from Thermococcus sibiricus (strain DSM 12597 / MM 739).